The primary structure comprises 182 residues: Large ribosomal subunit protein uL16 (182 aa).

It belongs to the universal ribosomal protein uL16 family.

The polypeptide is Large ribosomal subunit protein uL16 (Thermococcus gammatolerans (strain DSM 15229 / JCM 11827 / EJ3)).